A 1342-amino-acid chain; its full sequence is DNA-directed RNA polymerase subunit beta (1342 aa).

The protein belongs to the RNA polymerase beta chain family. As to quaternary structure, the RNAP catalytic core consists of 2 alpha, 1 beta, 1 beta' and 1 omega subunit. When a sigma factor is associated with the core the holoenzyme is formed, which can initiate transcription.

It carries out the reaction RNA(n) + a ribonucleoside 5'-triphosphate = RNA(n+1) + diphosphate. Functionally, DNA-dependent RNA polymerase catalyzes the transcription of DNA into RNA using the four ribonucleoside triphosphates as substrates. This chain is DNA-directed RNA polymerase subunit beta, found in Aeromonas salmonicida (strain A449).